The following is a 140-amino-acid chain: Putative pre-16S rRNA nuclease (140 aa).

It belongs to the YqgF nuclease family.

It localises to the cytoplasm. Could be a nuclease involved in processing of the 5'-end of pre-16S rRNA. In Yersinia pseudotuberculosis serotype IB (strain PB1/+), this protein is Putative pre-16S rRNA nuclease.